Here is an 80-residue protein sequence, read N- to C-terminus: MNINLQFHSTGKRTELNFDETDKIELIKNSIRIMEGINPQEQKLIFDGKVLKDTSTLKSCGIKDGSTISVLFEKSSNFLK.

Belongs to the ubiquitin family.

This is Ubiquitin-like protein NEDD8-like protein 2 (nedd8l2) from Dictyostelium discoideum (Social amoeba).